A 493-amino-acid chain; its full sequence is Na(+)/H(+) antiporter subunit D (493 aa).

Helical transmembrane passes span 3-23 (NFVI…IFMT), 31-51 (IFST…VQTV), 77-97 (FASL…LYSF), 107-127 (SFYY…FLTG), 129-149 (LFNM…LIVL), 163-183 (IVFN…LYAV), 203-223 (GLIT…GGIF), 227-247 (FWLP…FGAL), 251-271 (VGLY…TAFT), 274-294 (LMIW…LAYS), 299-319 (IVIY…AVHT), 330-350 (LIHD…LIAL), 370-390 (GWMF…SGFV), 407-427 (ISML…RIFI), and 449-469 (LYPA…TEWV).

Belongs to the CPA3 antiporters (TC 2.A.63) subunit D family. As to quaternary structure, forms a heterooligomeric complex that consists of seven subunits: MrpA, MrpB, MrpC, MrpD, MrpE, MrpF and MrpG.

It localises to the cell membrane. Its function is as follows. Mrp complex is a Na(+)/H(+) antiporter that is considered to be the major Na(+) excretion system in B.subtilis. Has a major role in Na(+) resistance and a minor role in Na(+)- and K(+)-dependent pH homeostasis as compared to TetB. MrpA may be the actual Na(+)/H(+) antiporter, although the six other Mrp proteins are all required for Na(+)/H(+) antiport activity and Na(+) resistance. MrpA is required for initiation of sporulation when external Na(+) concentration increases. Also transports Li(+) but not K(+), Ca(2+) or Mg(2+). This Bacillus subtilis (strain 168) protein is Na(+)/H(+) antiporter subunit D (mrpD).